Reading from the N-terminus, the 92-residue chain is Small ribosomal subunit protein bS21 (92 aa).

Positions 37-92 (QREGTFREMKRRNHYEKPSEKKARQKAEAIRRARKLARKRAQREGLIAKRGGTTRR) are disordered. Positions 51-67 (YEKPSEKKARQKAEAIR) are enriched in basic and acidic residues. The segment covering 68–77 (RARKLARKRA) has biased composition (basic residues).

It belongs to the bacterial ribosomal protein bS21 family.

This is Small ribosomal subunit protein bS21 from Maricaulis maris (strain MCS10) (Caulobacter maris).